Reading from the N-terminus, the 492-residue chain is Auxin transporter-like protein 1 (492 aa).

Residues 1–67 (MVPREQAEEA…DAWFSCASNQ (67 aa)) are Cytoplasmic-facing. The helical transmembrane segment at 68–85 (VAQVLLTLPYSFSQLGML) threads the bilayer. Residues 86–87 (SG) lie on the Extracellular side of the membrane. Residues 88–108 (VLLQLFYGFMGSWTAYLISVL) traverse the membrane as a helical segment. Residues 109-143 (YVEYRSRKEKEGVSFKNHVIQWFEVLDGLLGPYWK) are Cytoplasmic-facing. A helical transmembrane segment spans residues 144–164 (AAGLAFNCTFLLFGSVIQLIA). Topologically, residues 165–180 (CASNIYYINDRLDKRT) are extracellular. Residues 181 to 201 (WTYIFGACCATTVFIPSFHNY) form a helical membrane-spanning segment. Position 202 (Arg202) is a topological domain, cytoplasmic. A helical transmembrane segment spans residues 203 to 223 (IWSFLGLGMTTYTAWYLAIAA). The Extracellular segment spans residues 224–240 (LLNGQAEGITHTGPTKL). A helical membrane pass occupies residues 241–261 (VLYFTGATNILYTFGGHAVTV). The Cytoplasmic portion of the chain corresponds to 262–274 (EIMHAMWKPAKFK). A helical membrane pass occupies residues 275-295 (YIYLLATLYVFTLTLPSASAM). At 296 to 322 (YWAFGDELLTHSNAFSLLPKTGWRDAA) the chain is on the extracellular side. The chain crosses the membrane as a helical span at residues 323–343 (VILMLIHQFITFGFACTPLYF). At 344-364 (VWEKVIGMHDTKSICLRALAR) the chain is on the cytoplasmic side. Residues 365–385 (LPIVVPIWFLAIIFPFFGPIN) form a helical membrane-spanning segment. Ser386 is a topological domain (extracellular). The chain crosses the membrane as a helical span at residues 387 to 407 (AVGALLVSFTVYIIPALAHIL). The Cytoplasmic portion of the chain corresponds to 408–432 (TYRTASARMNAAEKPPFFLPSWTGM). Residues 433-453 (FVLNMFIVVWVLVVGFGLGGW) form a helical membrane-spanning segment. Residues 454-492 (ASMVNFIRQIDTFGLFAKCYQCPKPAPALAQSPVPLPHH) lie on the Extracellular side of the membrane.

Belongs to the amino acid/polyamine transporter 2 family. Amino acid/auxin permease (AAAP) (TC 2.A.18.1) subfamily.

Its subcellular location is the cell membrane. Its function is as follows. Carrier protein involved in proton-driven auxin influx. May mediate the formation of auxin gradient from developing leaves (site of auxin biosynthesis) to tips. This Oryza sativa subsp. japonica (Rice) protein is Auxin transporter-like protein 1.